Reading from the N-terminus, the 96-residue chain is Co-chaperonin GroES (96 aa).

This sequence belongs to the GroES chaperonin family. In terms of assembly, heptamer of 7 subunits arranged in a ring. Interacts with the chaperonin GroEL.

The protein resides in the cytoplasm. Functionally, together with the chaperonin GroEL, plays an essential role in assisting protein folding. The GroEL-GroES system forms a nano-cage that allows encapsulation of the non-native substrate proteins and provides a physical environment optimized to promote and accelerate protein folding. GroES binds to the apical surface of the GroEL ring, thereby capping the opening of the GroEL channel. The polypeptide is Co-chaperonin GroES (Colwellia maris).